The sequence spans 150 residues: 3-dehydroquinate dehydratase (150 aa).

Residue tyrosine 26 is the Proton acceptor of the active site. Positions 77, 83, and 90 each coordinate substrate. Residue histidine 103 is the Proton donor of the active site. Residues 104–105 and arginine 114 contribute to the substrate site; that span reads LS.

Belongs to the type-II 3-dehydroquinase family. As to quaternary structure, homododecamer.

The catalysed reaction is 3-dehydroquinate = 3-dehydroshikimate + H2O. It functions in the pathway metabolic intermediate biosynthesis; chorismate biosynthesis; chorismate from D-erythrose 4-phosphate and phosphoenolpyruvate: step 3/7. Its function is as follows. Catalyzes a trans-dehydration via an enolate intermediate. This Pectobacterium carotovorum subsp. carotovorum (strain PC1) protein is 3-dehydroquinate dehydratase.